The primary structure comprises 163 residues: Augmin complex subunit wac (163 aa).

Residues 86–115 (ELQRILSSIEEATRDVVMLERFNAAAEERL) are a coiled coil.

In terms of assembly, component of the augmin complex composed of dgt2, dgt3, dgt4, dgt5, dgt6, msd1, msd5 and wac. The complex interacts directly or indirectly with microtubules and is required for centrosome-independent generation of spindle microtubules. wac interacts directly (via coiled coil) with dgt2. In adult females, detected only in the abdomen with no expression in the head or thorax (at protein level).

It localises to the cytoplasm. It is found in the cytoskeleton. The protein resides in the spindle. The protein localises to the spindle pole. Functionally, as part of the augmin complex, plays a role in centrosome-independent generation of spindle microtubules. The complex is required for mitotic spindle assembly through its involvement in localizing gamma-tubulin to spindle microtubules. wac is dispensable for somatic mitosis and for assembly of spindle microtubules in oocytes during female meiosis but is required during female meiosis for chromosome alignment and segregation. It is required for microtubule assembly near spindle poles in oocytes. It is also required for acentrosomal microtubule nucleation and meiotic spindle formation during male meiosis. wac binds to microtubules in vitro. In Drosophila melanogaster (Fruit fly), this protein is Augmin complex subunit wac.